Consider the following 489-residue polypeptide: Probable transporter MCH1 (489 aa).

Transmembrane regions (helical) follow at residues 30-50, 68-88, and 92-112; these read IAYI…LISL, MIVT…GIIA, and GPIT…AYLA. N123 carries N-linked (GlcNAc...) asparagine glycosylation. The next 8 membrane-spanning stretches (helical) occupy residues 132–152, 163–183, 202–222, 279–299, 307–327, 351–371, 388–408, and 421–441; these read TLVC…SALI, LLSI…GSQF, VFKA…IATS, VLYI…MFIA, VLAG…YALT, WILL…YMLS, FYIG…YPTI, and AYGT…LIYA. A glycan (N-linked (GlcNAc...) asparagine) is linked at N450. A helical membrane pass occupies residues 462 to 482; sequence ETTALEFCAAILLTVVVTVLW.

The protein belongs to the major facilitator superfamily.

It is found in the vacuole membrane. Probable transporter. In Candida glabrata (strain ATCC 2001 / BCRC 20586 / JCM 3761 / NBRC 0622 / NRRL Y-65 / CBS 138) (Yeast), this protein is Probable transporter MCH1 (MCH1).